The primary structure comprises 2534 residues: Highly reducing polyketide synthase easB (2534 aa).

Positions 1 to 49 (MSPASRSRVEIADSESDSERLSSSPWSILSDNDSNTSDERSTRAGPGSL) are disordered. Positions 49–470 (LEPIAVIGIG…GTNAHVIIDA (422 aa)) constitute a Ketosynthase family 3 (KS3) domain. Active-site for beta-ketoacyl synthase activity residues include Cys-222, His-356, and His-396. The tract at residues 587–885 (IFSGQGAQYA…LSGPVNQILK (299 aa)) is malonyl-CoA:ACP transacylase (MAT) domain. Residues 973–1111 (HELLGTLSAD…GLVQAEVDSV (139 aa)) are N-terminal hotdog fold. Residues 973-1273 (HELLGTLSAD…QGIRVTSLGG (301 aa)) are dehydratase (DH) domain. Positions 973 to 1277 (HELLGTLSAD…VTSLGGDVAA (305 aa)) constitute a PKS/mFAS DH domain. The active-site Proton acceptor; for dehydratase activity is His-1005. Residues 1131-1277 (THGTIPQKFY…VTSLGGDVAA (147 aa)) are C-terminal hotdog fold. The active-site Proton donor; for dehydratase activity is Asp-1193. The tract at residues 1395–1625 (KTSALSLLTK…VFISTAPFPR (231 aa)) is methyltransferase (CMet) domain. Residues 1834-2146 (GLLETIRWKD…AGKHTGKIVL (313 aa)) form an enoyl reductase (ER) domain region. In terms of domain architecture, Carrier spans 2452 to 2529 (EAVHIVTNAI…QLAAIVAKES (78 aa)). The interval 2453-2526 (AVHIVTNAIL…SISQLAAIVA (74 aa)) is ketoreductase (KR) domain. Ser-2489 carries the O-(pantetheine 4'-phosphoryl)serine modification.

Its pathway is antibiotic biosynthesis. Functionally, polyketide synthase; part of the gene cluster that mediates the biosynthesis of emericellamides, secondary metabolites acting as antibiotics. The biosynthesis of emericellamides initiates from the highly reducing polyketide synthase easB which catalyzes the formation of the linear polyketide chain. EasB produces several polyketides that can be further processed by the downstream enzymes. The polyketides are released from easB as linear polyketide carboxylic acids, which are converted to CoA thioesters by the acyl-CoA ligase easD. The substrates are then loaded onto the acyltransferase easC, which shuttles them to the first thiolation (T) domain of the nonribosomal peptide synthetase easA. EasA then performs condensation of the polyketides with one glycine, two alanine, one valine and one leucine residues. A last step of cyclization leads to the production of emericellamides. This is Highly reducing polyketide synthase easB from Emericella nidulans (strain FGSC A4 / ATCC 38163 / CBS 112.46 / NRRL 194 / M139) (Aspergillus nidulans).